Here is a 211-residue protein sequence, read N- to C-terminus: Redox-sensing transcriptional repressor Rex (211 aa).

Residues 17–56 constitute a DNA-binding region (H-T-H motif); sequence KYHRYLEELLRNEVDRISSKELSKKIGFTASQIRQDFNCF. 91–96 is a binding site for NAD(+); sequence GGGNIG.

The protein belongs to the transcriptional regulatory Rex family. Homodimer.

The protein resides in the cytoplasm. Its function is as follows. Modulates transcription in response to changes in cellular NADH/NAD(+) redox state. The protein is Redox-sensing transcriptional repressor Rex of Clostridium tetani (strain Massachusetts / E88).